The chain runs to 470 residues: Argininosuccinate lyase (470 aa).

It belongs to the lyase 1 family. Argininosuccinate lyase subfamily.

It localises to the cytoplasm. It carries out the reaction 2-(N(omega)-L-arginino)succinate = fumarate + L-arginine. The protein operates within amino-acid biosynthesis; L-arginine biosynthesis; L-arginine from L-ornithine and carbamoyl phosphate: step 3/3. The polypeptide is Argininosuccinate lyase (Mycolicibacterium gilvum (strain PYR-GCK) (Mycobacterium gilvum (strain PYR-GCK))).